A 159-amino-acid chain; its full sequence is Putative pre-16S rRNA nuclease (159 aa).

The protein belongs to the YqgF nuclease family.

Its subcellular location is the cytoplasm. Its function is as follows. Could be a nuclease involved in processing of the 5'-end of pre-16S rRNA. In Bartonella quintana (strain Toulouse) (Rochalimaea quintana), this protein is Putative pre-16S rRNA nuclease.